The chain runs to 975 residues: Synaptopodin 2-like protein (975 aa).

The PDZ domain occupies 6 to 85; it reads EVQVTLAGGA…QLVLTVRRVT (80 aa). 3 disordered regions span residues 18–41, 86–214, and 314–349; these read GFRL…QAGR, DEGS…PAEA, and AGTG…QSDW. Residues serine 105 and serine 108 each carry the phosphoserine modification. At threonine 138 the chain carries Phosphothreonine. Serine 140, serine 163, serine 175, and serine 177 each carry phosphoserine. Over residues 187–200 the composition is skewed to polar residues; that stretch reads GSPSQGDSRVSSPS. Residues 202–214 are compositionally biased toward low complexity; that stretch reads EEGAALQPPPAEA. Polar residues predominate over residues 339-349; the sequence is DARSLTNQSDW. Serine 342, serine 347, serine 371, serine 378, and serine 381 each carry phosphoserine. Omega-N-methylarginine occurs at positions 383, 463, 466, and 476. Residues 491–649 form a disordered region; that stretch reads KVNEGLGSTS…ETKNSPNPEL (159 aa). Over residues 502 to 516 the composition is skewed to pro residues; it reads APSPFAAPPQGPTPL. The segment covering 519–528 has biased composition (polar residues); it reads FTTVVPSHTP. Low complexity-rich tracts occupy residues 530-540 and 571-580; these read SGASSSTQRSS and SAAAMTSTAS. Phosphoserine occurs at positions 667 and 675. A disordered region spans residues 687–731; it reads LGGRSYKTLPQVSPKTPPPMAPKTPPPTTPKTPPPVAPKPGSRGL. Pro residues predominate over residues 701–724; that stretch reads KTPPPMAPKTPPPTTPKTPPPVAP. 2 positions are modified to phosphothreonine: threonine 702 and threonine 710. Arginine 754 bears the Omega-N-methylarginine mark. Residues 772–797 form a disordered region; it reads EATSGSSLNPGLRPRSPSPTPSLPPS. Phosphoserine occurs at positions 787 and 789. Threonine 791 carries the phosphothreonine modification. 3 positions are modified to omega-N-methylarginine: arginine 805, arginine 825, and arginine 888. Serine 890 is subject to Phosphoserine. Threonine 891 and threonine 897 each carry phosphothreonine. Arginine 909 carries the omega-N-methylarginine modification. The residue at position 920 (arginine 920) is an Asymmetric dimethylarginine; alternate. Arginine 920 is subject to Omega-N-methylarginine; alternate. Omega-N-methylarginine occurs at positions 953 and 955.

Belongs to the synaptopodin family.

It localises to the cytoplasm. The protein resides in the cytoskeleton. Its function is as follows. Actin-associated protein that may play a role in modulating actin-based shape. In Mus musculus (Mouse), this protein is Synaptopodin 2-like protein (Synpo2l).